Reading from the N-terminus, the 736-residue chain is Polyribonucleotide nucleotidyltransferase (736 aa).

Positions 493 and 499 each coordinate Mg(2+). The 60-residue stretch at 560–619 folds into the KH domain; sequence PQHAELVVNPDAIRMIIGPGGKNIKQITTVTGAAIDINDSGKISIFAPTSEAMEQAKQMI. Positions 629 to 703 constitute an S1 motif domain; the sequence is GKNYKGKVRK…SRKAVLLEEE (75 aa). Positions 710 to 736 are disordered; that stretch reads EESSRFSKGNRNGDRSRHNNRERTRRT. Residues 720–736 show a composition bias toward basic and acidic residues; it reads RNGDRSRHNNRERTRRT.

This sequence belongs to the polyribonucleotide nucleotidyltransferase family. Mg(2+) serves as cofactor.

It localises to the cytoplasm. The enzyme catalyses RNA(n+1) + phosphate = RNA(n) + a ribonucleoside 5'-diphosphate. Functionally, involved in mRNA degradation. Catalyzes the phosphorolysis of single-stranded polyribonucleotides processively in the 3'- to 5'-direction. This Lawsonia intracellularis (strain PHE/MN1-00) protein is Polyribonucleotide nucleotidyltransferase.